We begin with the raw amino-acid sequence, 304 residues long: Insulin-like growth factor 1 receptor (304 aa).

2 Fibronectin type-III domains span residues 1-43 (ERTV…TMPA) and 49-142 (IPGP…VQAK). The Extracellular segment spans residues 1–147 (ERTVISNLRP…YVQAKTTYEN (147 aa)). N-linked (GlcNAc...) asparagine glycosylation is found at Asn-115 and Asn-128. Residues 148–168 (FIHLIIALPVAVLLIVGGLVI) traverse the membrane as a helical segment. Residues 169–304 (MLYVFHRKRN…HMNGGRKNER (136 aa)) lie on the Cytoplasmic side of the membrane. Ser-225 bears the Phosphoserine; by GSK3-beta mark. Ser-229 is modified (phosphoserine). The segment at 231 to 304 (ENKPPEPEEL…HMNGGRKNER (74 aa)) is disordered. Residues 237 to 246 (PEELDLEPEN) are compositionally biased toward acidic residues. The span at 247-263 (MESVPLDPSASSSSLPL) shows a compositional bias: low complexity. Positions 264–273 (PDRHSGHKAE) are enriched in basic and acidic residues.

Belongs to the protein kinase superfamily. Tyr protein kinase family. Insulin receptor subfamily. In terms of assembly, tetramer of 2 alpha and 2 beta chains linked by disulfide bonds. The alpha chains contribute to the formation of the ligand-binding domain, while the beta chain carries the kinase domain. Forms a hybrid receptor with INSR, the hybrid is a tetramer consisting of 1 alpha chain and 1 beta chain of INSR and 1 alpha chain and 1 beta chain of IGF1R. Interacts with ARRB1 and ARRB2. Interacts with GRB10. Interacts with RACK1. Interacts with SOCS1, SOCS2 and SOCS3. Interacts with 14-3-3 proteins. Interacts with NMD2. Interacts with MAP3K5. Interacts with STAT3. Found in a ternary complex with IGF1 and ITGAV:ITGB3 or ITGA6:ITGB4. Interacts (nascent precursor form) with ZFAND2B. In terms of processing, autophosphorylated on tyrosine residues in response to ligand binding. Autophosphorylation occurs in trans, i.e. one subunit of the dimeric receptor phosphorylates tyrosine residues on the other subunit. Autophosphorylation occurs in a sequential manner. While every single phosphorylation increases kinase activity, all three tyrosine residues in the kinase activation loop have to be phosphorylated for optimal activity. Can be autophosphorylated at additional tyrosine residues (in vitro). May also be phosphorylated at tyrosine residues by mTORC2. Autophosphorylated is followed by phosphorylation of juxtamembrane tyrosines and C-terminal serines. Phosphorylation of Ser-225 by GSK-3beta restrains kinase activity and promotes cell surface expression, it requires a priming phosphorylation at Ser-229. Dephosphorylated by PTPN1. Post-translationally, polyubiquitinated in the activation loop through both 'Lys-48' and 'Lys-29' linkages, promoting receptor endocytosis and subsequent degradation by the proteasome. Ubiquitination is facilitated by pre-existing phosphorylation. Sumoylated with SUMO1. In terms of processing, controlled by regulated intramembrane proteolysis (RIP). Undergoes metalloprotease-dependent constitutive ectodomain shedding to produce a membrane-anchored 52 kDa C-Terminal fragment which is further processed by presenilin gamma-secretase to yield an intracellular 50 kDa fragment.

The protein resides in the cell membrane. It catalyses the reaction L-tyrosyl-[protein] + ATP = O-phospho-L-tyrosyl-[protein] + ADP + H(+). With respect to regulation, activated by autophosphorylation at tyrosines in the kinase activation loop; phosphorylation at all three tyrosine residues is required for optimal kinase activity. Inhibited by MSC1609119A-1, BMS-754807, PQIP, benzimidazole pyridinone, isoquinolinedione, bis-azaindole, 3-cyanoquinoline, 2,4-bis-arylamino-1,3-pyrimidine, pyrrolopyrimidine, pyrrole-5-carboxaldehyde, picropodophyllin (PPP), tyrphostin derivatives. While most inhibitors bind to the ATP binding pocket, MSC1609119A-1 functions as allosteric inhibitor and binds close to the DFG motif and the activation loop. Receptor tyrosine kinase which mediates actions of insulin-like growth factor 1 (IGF1). Binds IGF1 with high affinity and IGF2 and insulin (INS) with a lower affinity. The activated IGF1R is involved in cell growth and survival control. IGF1R is crucial for tumor transformation and survival of malignant cell. Ligand binding activates the receptor kinase, leading to receptor autophosphorylation, and tyrosines phosphorylation of multiple substrates, that function as signaling adapter proteins including, the insulin-receptor substrates (IRS1/2), Shc and 14-3-3 proteins. Phosphorylation of IRSs proteins lead to the activation of two main signaling pathways: the PI3K-AKT/PKB pathway and the Ras-MAPK pathway. The result of activating the MAPK pathway is increased cellular proliferation, whereas activating the PI3K pathway inhibits apoptosis and stimulates protein synthesis. Phosphorylated IRS1 can activate the 85 kDa regulatory subunit of PI3K (PIK3R1), leading to activation of several downstream substrates, including protein AKT/PKB. AKT phosphorylation, in turn, enhances protein synthesis through mTOR activation and triggers the antiapoptotic effects of IGFIR through phosphorylation and inactivation of BAD. In parallel to PI3K-driven signaling, recruitment of Grb2/SOS by phosphorylated IRS1 or Shc leads to recruitment of Ras and activation of the ras-MAPK pathway. In addition to these two main signaling pathways IGF1R signals also through the Janus kinase/signal transducer and activator of transcription pathway (JAK/STAT). Phosphorylation of JAK proteins can lead to phosphorylation/activation of signal transducers and activators of transcription (STAT) proteins. In particular activation of STAT3, may be essential for the transforming activity of IGF1R. The JAK/STAT pathway activates gene transcription and may be responsible for the transforming activity. JNK kinases can also be activated by the IGF1R. IGF1 exerts inhibiting activities on JNK activation via phosphorylation and inhibition of MAP3K5/ASK1, which is able to directly associate with the IGF1R. When present in a hybrid receptor with INSR, binds IGF1. The sequence is that of Insulin-like growth factor 1 receptor (IGF1R) from Sus scrofa (Pig).